The sequence spans 341 residues: Methionine import ATP-binding protein MetN 1 (341 aa).

Positions 2–241 constitute an ABC transporter domain; the sequence is IEFRQVSKTF…PKTTIAQNFV (240 aa). 38–45 serves as a coordination point for ATP; the sequence is GYSGAGKS.

It belongs to the ABC transporter superfamily. Methionine importer (TC 3.A.1.24) family. In terms of assembly, the complex is composed of two ATP-binding proteins (MetN), two transmembrane proteins (MetI) and a solute-binding protein (MetQ).

Its subcellular location is the cell membrane. It carries out the reaction L-methionine(out) + ATP + H2O = L-methionine(in) + ADP + phosphate + H(+). It catalyses the reaction D-methionine(out) + ATP + H2O = D-methionine(in) + ADP + phosphate + H(+). Functionally, part of the ABC transporter complex MetNIQ involved in methionine import. Responsible for energy coupling to the transport system. The sequence is that of Methionine import ATP-binding protein MetN 1 from Staphylococcus aureus (strain USA300).